Consider the following 524-residue polypeptide: Lysine--tRNA ligase (524 aa).

The Mg(2+) site is built by E433 and E440.

The protein belongs to the class-II aminoacyl-tRNA synthetase family. In terms of assembly, homodimer. The cofactor is Mg(2+).

The protein localises to the cytoplasm. It catalyses the reaction tRNA(Lys) + L-lysine + ATP = L-lysyl-tRNA(Lys) + AMP + diphosphate. The chain is Lysine--tRNA ligase from Colwellia psychrerythraea (strain 34H / ATCC BAA-681) (Vibrio psychroerythus).